Here is a 505-residue protein sequence, read N- to C-terminus: uncharacterized protein (505 aa).

The interval 1 to 52 (MVDGSIHVPVQSHEGQHDNSSSLNEEIQTSQDPLGIVESYQESSTSDFDKSH) is disordered. A compositionally biased stretch (polar residues) spans 18–32 (DNSSSLNEEIQTSQD). A run of 10 helical transmembrane segments spans residues 141–161 (FWIV…TNTF), 173–193 (AFQT…YTVF), 208–228 (GWKY…VVLA), 235–255 (LSAS…SFIF), 265–285 (ILGV…DVIS), 290–310 (SAVN…CYGV), 326–346 (VVIG…TFIF), 362–382 (GYLA…PILF), 389–409 (FYNI…IHVF), and 415–435 (WLYP…HVFV). Residues Ser-463, Ser-466, and Ser-467 each carry the phosphoserine modification.

It belongs to the SLC35F solute transporter family.

It localises to the golgi apparatus membrane. This is an uncharacterized protein from Schizosaccharomyces pombe (strain 972 / ATCC 24843) (Fission yeast).